Consider the following 422-residue polypeptide: Zinc finger protein Gfi-1 (422 aa).

The interval 1–20 (MPRSFLVKSKKAHSYHQPRS) is SNAG domain. Residues 1 to 109 (MPRSFLVKSK…ASEKSMCPSL (109 aa)) are disordered. A phosphoserine mark is found at Ser20 and Ser56. The required for interaction with RELA stretch occupies residues 140–257 (RPCGALERGA…LLLGGGSYKC (118 aa)). 6 consecutive C2H2-type zinc fingers follow at residues 255 to 278 (YKCIKCSKVFSTPHGLEVHVRRSH), 284 to 306 (FACEMCGKTFGHAVSLEQHKAVH), 312 to 334 (FDCKICGKSFKRSSTLSTHLLIH), 340 to 362 (YPCQYCGKRFHQKSDMKKHTFIH), 368 to 390 (HKCQVCGKAFSQSSNLITHSRKH), and 396 to 419 (FGCDLCGKGFQRKVDLRRHRETQH).

As to quaternary structure, interacts with U2AF1L4. Component of RCOR-GFI-KDM1A-HDAC complexes. Interacts directly with RCOR1, KDM1A and HDAC2. Also interacts with HDAC1. Interacts (via the zinc-finger domain) with ARIH2; the interaction prevents GFI1 ubiquitination and proteasomal degradation. Interacts with PIAS3; the interaction relieves the inhibitory effect of PIAS3 on STAT3-mediated transcriptional activity. Forms a complex with EHMT2 and HDAC1 to promote 'Lys-9' dimethylation of H3 (H3K9Me2) and repress expression of target genes. Interacts directly with EHMT2. Component of the GFI1-AJUBA-HDAC1 repressor complex. Interacts directly with AJUBA (via ITS LIM domains); the interaction results in the HDAC-dependent corepression of a subset of GFI1 target genes and, occurs independently of the SNAG domain. Interacts with SPI1; the interaction inhibits SPI1 transcriptional activity targeted at macrophage-specific genes, repressing macrophage differentiation of myeloid progenitor cells and promoting granulocyte commitment. Interacts with RUNX1T1; the interaction represses HDAC-mediated transcriptional activity. Interacts with RELA; the interaction occurs on liposaccharide (LPS) stimulation and controls RELA DNA binding activity and regulates endotoxin-mediated TOLL-like receptor inflammatory response. Interacts (via the C-terminal zinc fingers) with ZBTB17; the interaction results in the recruitment of GFI1 to the CDKN1A/p21 and CDKN1B promoters and repression of transcription. Ubiquitinated. Ubiquitination and degradation by the proteasome is inhibited by the ubiquitin ligase, ARIH2.

The protein resides in the nucleus. In terms of biological role, transcription repressor essential for hematopoiesis. Functions in a cell-context and development-specific manner. Binds to 5'-TAAATCAC[AT]GCA-3' in the promoter region of a large number of genes. Component of several complexes, including the EHMT2-GFI1-HDAC1, AJUBA-GFI1-HDAC1 and RCOR-GFI-KDM1A-HDAC complexes, that suppress, via histone deacetylase (HDAC) recruitment, a number of genes implicated in multilineage blood cell development. Regulates neutrophil differentiation, promotes proliferation of lymphoid cells, and is required for granulocyte development. Inhibits SPI1 transcriptional activity at macrophage-specific genes, repressing macrophage differentiation of myeloid progenitor cells and promoting granulocyte commitment. Mediates, together with U2AF1L4, the alternative splicing of CD45 and controls T-cell receptor signaling. Regulates the endotoxin-mediated Toll-like receptor (TLR) inflammatory response by antagonizing RELA. Cooperates with CBFA2T2 to regulate ITGB1-dependent neurite growth. Controls cell-cycle progression by repressing CDKNIA/p21 transcription in response to TGFB1 via recruitment of GFI1 by ZBTB17 to the CDKNIA/p21 and CDKNIB promoters. Required for the maintenance of inner ear hair cells. In addition to its role in transcription, acts as a substrate adapter for PRMT1 in the DNA damage response: facilitates the recognition of TP53BP1 and MRE11 substrates by PRMT1, promoting their methylation and the DNA damage response. This Homo sapiens (Human) protein is Zinc finger protein Gfi-1 (GFI1).